Reading from the N-terminus, the 385-residue chain is 1-deoxy-D-xylulose 5-phosphate reductoisomerase (385 aa).

Positions 10, 11, 12, 13, 37, and 124 each coordinate NADPH. K125 contributes to the 1-deoxy-D-xylulose 5-phosphate binding site. E126 is a binding site for NADPH. Residue D150 participates in Mn(2+) binding. Positions 151, 152, 176, and 199 each coordinate 1-deoxy-D-xylulose 5-phosphate. E152 contacts Mn(2+). Residue G205 coordinates NADPH. Residues S212, N217, K218, and E221 each coordinate 1-deoxy-D-xylulose 5-phosphate. E221 contacts Mn(2+).

This sequence belongs to the DXR family. Requires Mg(2+) as cofactor. Mn(2+) is required as a cofactor.

It carries out the reaction 2-C-methyl-D-erythritol 4-phosphate + NADP(+) = 1-deoxy-D-xylulose 5-phosphate + NADPH + H(+). The protein operates within isoprenoid biosynthesis; isopentenyl diphosphate biosynthesis via DXP pathway; isopentenyl diphosphate from 1-deoxy-D-xylulose 5-phosphate: step 1/6. Its function is as follows. Catalyzes the NADPH-dependent rearrangement and reduction of 1-deoxy-D-xylulose-5-phosphate (DXP) to 2-C-methyl-D-erythritol 4-phosphate (MEP). The polypeptide is 1-deoxy-D-xylulose 5-phosphate reductoisomerase (Clostridium botulinum (strain ATCC 19397 / Type A)).